A 210-amino-acid polypeptide reads, in one-letter code: Ribosomal RNA small subunit methyltransferase G (210 aa).

Residues Gly-76, Leu-81, 127 to 128 (VE), and Arg-142 contribute to the S-adenosyl-L-methionine site.

This sequence belongs to the methyltransferase superfamily. RNA methyltransferase RsmG family.

Its subcellular location is the cytoplasm. The catalysed reaction is guanosine(527) in 16S rRNA + S-adenosyl-L-methionine = N(7)-methylguanosine(527) in 16S rRNA + S-adenosyl-L-homocysteine. Its function is as follows. Specifically methylates the N7 position of guanine in position 527 of 16S rRNA. This is Ribosomal RNA small subunit methyltransferase G from Aliivibrio fischeri (strain ATCC 700601 / ES114) (Vibrio fischeri).